We begin with the raw amino-acid sequence, 619 residues long: Long-chain fatty acid transport protein 6 (619 aa).

2 helical membrane passes run 22-42 and 119-139; these read LLFP…LIII and VHVW…NTNI. 221-232 contributes to the AMP binding site; that stretch reads YIFTSGTTGLPK.

Belongs to the ATP-dependent AMP-binding enzyme family. Strongly expressed in heart and localizes to cardiac myocytes. Expressed at moderate levels in placenta, testis, and adrenal glands. Expressed at very low levels in kidney, bladder and uterus.

It is found in the cell membrane. The protein resides in the sarcolemma. It carries out the reaction a fatty acid(in) = a fatty acid(out). The catalysed reaction is hexadecanoate(out) = hexadecanoate(in). The enzyme catalyses (9Z)-octadecenoate(out) = (9Z)-octadecenoate(in). It catalyses the reaction (9Z,12Z)-octadecadienoate(out) = (9Z,12Z)-octadecadienoate(in). It carries out the reaction a very long-chain fatty acid + ATP + CoA = a very long-chain fatty acyl-CoA + AMP + diphosphate. The catalysed reaction is tetracosanoate + ATP + CoA = tetracosanoyl-CoA + AMP + diphosphate. The enzyme catalyses a long-chain fatty acid + ATP + CoA = a long-chain fatty acyl-CoA + AMP + diphosphate. It catalyses the reaction (5Z,8Z,11Z,14Z)-eicosatetraenoate + ATP + CoA = (5Z,8Z,11Z,14Z)-eicosatetraenoyl-CoA + AMP + diphosphate. It carries out the reaction (9Z)-octadecenoate + ATP + CoA = (9Z)-octadecenoyl-CoA + AMP + diphosphate. Its function is as follows. Mediates the import of long-chain fatty acids (LCFA) into the cell by facilitating their transport at the plasma membrane. Also functions as an acyl-CoA ligase catalyzing the ATP-dependent formation of fatty acyl-CoA using LCFA and very-long-chain fatty acids (VLCFA) as substrates. Plays a pivotal role in regulating available LCFA substrates from exogenous sources in tissues undergoing high levels of beta-oxidation such as the heart. The polypeptide is Long-chain fatty acid transport protein 6 (SLC27A6) (Homo sapiens (Human)).